Consider the following 225-residue polypeptide: Glutathione S-transferase Mu 5 (225 aa).

The region spanning 5–92 (KSMVLGYWDI…YIARKHNMCG (88 aa)) is the GST N-terminal domain. Ser-6 bears the Phosphoserine mark. Glutathione-binding positions include 11 to 12 (YW), 50 to 54 (WLDVK), 63 to 64 (NL), and 76 to 77 (QS). The region spanning 94-212 (TEEEKIRVDI…QSDRCFKMPI (119 aa)) is the GST C-terminal domain. Tyr-120 is a substrate binding site.

The protein belongs to the GST superfamily. Mu family. Homodimer. Post-translationally, the N-terminus is blocked. Expressed in testis and brain. Very low expression in liver, kidney, heart and lung.

The protein resides in the cytoplasm. The enzyme catalyses RX + glutathione = an S-substituted glutathione + a halide anion + H(+). Conjugation of reduced glutathione to a wide number of exogenous and endogenous hydrophobic electrophiles. In Rattus norvegicus (Rat), this protein is Glutathione S-transferase Mu 5 (Gstm5).